Here is a 336-residue protein sequence, read N- to C-terminus: Probable aquaglyceroporin-2 (336 aa).

The disordered stretch occupies residues Met1–Pro46. The Cytoplasmic portion of the chain corresponds to Met1 to Glu64. Residues Ser9–Ser19 show a composition bias toward low complexity. A helical membrane pass occupies residues Phe65–Ser85. The Extracellular segment spans residues Arg86–Ser94. Residues Ile95–Gly115 traverse the membrane as a helical segment. Over His116 to Lys135 the chain is Cytoplasmic. An NPA 1 motif is present at residues Asn118–Ala120. The chain crosses the membrane as a helical span at residues Phe136 to Gly156. The Extracellular portion of the chain corresponds to Asn157 to Thr195. A glycan (N-linked (GlcNAc...) asparagine) is linked at Asn178. A helical membrane pass occupies residues Gly196–Ala216. At Asp217–Ala223 the chain is on the cytoplasmic side. Residues Gly224–Trp244 form a helical membrane-spanning segment. Topologically, residues Glu245–Trp280 are extracellular. An NPA 2 motif is present at residues Asn251–Ala253. A helical transmembrane segment spans residues Ile281–Ile301. The Cytoplasmic portion of the chain corresponds to Tyr302–Val336.

This sequence belongs to the MIP/aquaporin (TC 1.A.8) family.

Its subcellular location is the membrane. The enzyme catalyses H2O(in) = H2O(out). The catalysed reaction is glycerol(in) = glycerol(out). Probable water/glycerol channel that may have redundant functions with FgAQP4. This chain is Probable aquaglyceroporin-2, found in Gibberella zeae (strain ATCC MYA-4620 / CBS 123657 / FGSC 9075 / NRRL 31084 / PH-1) (Wheat head blight fungus).